Here is a 339-residue protein sequence, read N- to C-terminus: Cyclin-D1-1 (339 aa).

The protein belongs to the cyclin family. Cyclin D subfamily. In terms of assembly, interacts with CDKA-1 and KRP6/ICK4. As to expression, expressed in roots, leaves and flowers.

In terms of biological role, may activate cell cycle in the root apical meristem (RAM) and promote embryonic root (radicle) protrusion. The sequence is that of Cyclin-D1-1 (CYCD1-1) from Arabidopsis thaliana (Mouse-ear cress).